We begin with the raw amino-acid sequence, 529 residues long: CTP synthase (529 aa).

Residues 1–270 are amidoligase domain; that stretch reads MKYIVVTGGV…ADVVCSYLSL (270 aa). Ser-12 provides a ligand contact to CTP. Position 12 (Ser-12) interacts with UTP. Residues 13–18 and Asp-70 each bind ATP; that span reads GLGKGI. Positions 70 and 145 each coordinate Mg(2+). CTP contacts are provided by residues 152–154, 191–196, and Lys-227; these read DIE and KTKPTQ. Residues 191-196 and Lys-227 each bind UTP; that span reads KTKPTQ. 243–245 contacts ATP; it reads KDA. The region spanning 293–525 is the Glutamine amidotransferase type-1 domain; it reads VAIVSKYGIE…VEACKKNKSS (233 aa). Gly-349 is a binding site for L-glutamine. Cys-376 (nucleophile; for glutamine hydrolysis) is an active-site residue. L-glutamine-binding positions include 377-380, Glu-400, and Arg-455; that span reads LGFQ. Residues His-498 and Glu-500 contribute to the active site.

Belongs to the CTP synthase family. As to quaternary structure, homotetramer.

The enzyme catalyses UTP + L-glutamine + ATP + H2O = CTP + L-glutamate + ADP + phosphate + 2 H(+). The catalysed reaction is L-glutamine + H2O = L-glutamate + NH4(+). It carries out the reaction UTP + NH4(+) + ATP = CTP + ADP + phosphate + 2 H(+). It functions in the pathway pyrimidine metabolism; CTP biosynthesis via de novo pathway; CTP from UDP: step 2/2. Its activity is regulated as follows. Allosterically activated by GTP, when glutamine is the substrate; GTP has no effect on the reaction when ammonia is the substrate. The allosteric effector GTP functions by stabilizing the protein conformation that binds the tetrahedral intermediate(s) formed during glutamine hydrolysis. Inhibited by the product CTP, via allosteric rather than competitive inhibition. Catalyzes the ATP-dependent amination of UTP to CTP with either L-glutamine or ammonia as the source of nitrogen. Regulates intracellular CTP levels through interactions with the four ribonucleotide triphosphates. In Methanoculleus marisnigri (strain ATCC 35101 / DSM 1498 / JR1), this protein is CTP synthase.